A 384-amino-acid polypeptide reads, in one-letter code: Chaperone protein DnaJ (384 aa).

One can recognise a J domain in the interval 5–70 (DYYEVLGVSK…DKKAAYDRYG (66 aa)). A disordered region spans residues 16-47 (ASSDDIKKGYRRKAKELHPDRNKDDPNAEAQF). Over residues 31-47 (ELHPDRNKDDPNAEAQF) the composition is skewed to basic and acidic residues. The CR-type zinc-finger motif lies at 143-221 (GLQKTINVPT…CQGAGRVEKD (79 aa)). The Zn(2+) site is built by Cys156, Cys159, Cys173, Cys176, Cys195, Cys198, Cys209, and Cys212. CXXCXGXG motif repeat units follow at residues 156-163 (CKTCNGSG), 173-180 (CPTCSGMG), 195-202 (CPTCSGLG), and 209-216 (CKSCQGAG).

Belongs to the DnaJ family. Homodimer. It depends on Zn(2+) as a cofactor.

It localises to the cytoplasm. Participates actively in the response to hyperosmotic and heat shock by preventing the aggregation of stress-denatured proteins and by disaggregating proteins, also in an autonomous, DnaK-independent fashion. Unfolded proteins bind initially to DnaJ; upon interaction with the DnaJ-bound protein, DnaK hydrolyzes its bound ATP, resulting in the formation of a stable complex. GrpE releases ADP from DnaK; ATP binding to DnaK triggers the release of the substrate protein, thus completing the reaction cycle. Several rounds of ATP-dependent interactions between DnaJ, DnaK and GrpE are required for fully efficient folding. Also involved, together with DnaK and GrpE, in the DNA replication of plasmids through activation of initiation proteins. The chain is Chaperone protein DnaJ from Roseobacter denitrificans (strain ATCC 33942 / OCh 114) (Erythrobacter sp. (strain OCh 114)).